Consider the following 207-residue polypeptide: Ribonuclease HII (207 aa).

The RNase H type-2 domain maps to 17–207; it reads RIVAGVDEVG…SFKPLAAFVD (191 aa). A divalent metal cation is bound by residues Asp-23, Glu-24, and Asp-120.

Belongs to the RNase HII family. Mn(2+) is required as a cofactor. Requires Mg(2+) as cofactor.

It localises to the cytoplasm. It carries out the reaction Endonucleolytic cleavage to 5'-phosphomonoester.. Endonuclease that specifically degrades the RNA of RNA-DNA hybrids. The protein is Ribonuclease HII of Herpetosiphon aurantiacus (strain ATCC 23779 / DSM 785 / 114-95).